The following is a 349-amino-acid chain: GDSL esterase/lipase At1g58725 (349 aa).

The first 19 residues, 1-19 (MKIQILLFALVLIFVEANA), serve as a signal peptide directing secretion. Asn25 is a glycosylation site (N-linked (GlcNAc...) asparagine). Catalysis depends on Ser37, which acts as the Nucleophile. N-linked (GlcNAc...) asparagine glycosylation is present at Asn316. Residues Asp324 and His327 contribute to the active site.

It belongs to the 'GDSL' lipolytic enzyme family.

The protein resides in the secreted. In Arabidopsis thaliana (Mouse-ear cress), this protein is GDSL esterase/lipase At1g58725.